Here is a 60-residue protein sequence, read N- to C-terminus: Anionic antimicrobial peptide 2 (60 aa).

Hemolymph.

It is found in the secreted. In terms of biological role, antimicrobial protein. Has antibacterial activity against the Gram-positive bacteria M.luteus (MIC=86.6 uM), L.monocytogenes (MIC=86.6 uM), and S.lutea (MIC=86.6 uM). Lacks antibacterial activity against the Gram-positive bacteria B.circulans and S.aureus, and the Gram-negative bacteria E.coli D31, E.coli ATCC 25922, and S.typhimurium. Has antifungal activity against P.pastoris (MIC=86.6 uM) and P.stipitis (MIC=90.9 uM), but lacks antifungal activity against A.niger, C.albicans, C.albidus, C.fructus, C.wickerhamii, F.oxysporum, S.cerevisiae, S.pombe, T.harzianum, and Z.marxianus. This is Anionic antimicrobial peptide 2 from Galleria mellonella (Greater wax moth).